The sequence spans 356 residues: DNA polymerase IV (356 aa).

Positions 6 to 187 (IIHIDMDYFF…LDIGDFPGVG (182 aa)) constitute a UmuC domain. Residues Asp-10 and Asp-105 each contribute to the Mg(2+) site. Glu-106 is an active-site residue.

The protein belongs to the DNA polymerase type-Y family. As to quaternary structure, monomer. Requires Mg(2+) as cofactor.

The protein localises to the cytoplasm. The enzyme catalyses DNA(n) + a 2'-deoxyribonucleoside 5'-triphosphate = DNA(n+1) + diphosphate. Functionally, poorly processive, error-prone DNA polymerase involved in untargeted mutagenesis. Copies undamaged DNA at stalled replication forks, which arise in vivo from mismatched or misaligned primer ends. These misaligned primers can be extended by PolIV. Exhibits no 3'-5' exonuclease (proofreading) activity. May be involved in translesional synthesis, in conjunction with the beta clamp from PolIII. The sequence is that of DNA polymerase IV from Staphylococcus aureus (strain JH1).